A 294-amino-acid chain; its full sequence is Protein RarD (294 aa).

The Cytoplasmic portion of the chain corresponds to 1 to 11 (MDAKQTRQGVL). Residues 12–34 (LALAAYFIWGIAPAYFKLIYYVP) form a helical membrane-spanning segment. Positions 18–145 (FIWGIAPAYF…AVCGVLVQLW (128 aa)) constitute an EamA domain. The Periplasmic portion of the chain corresponds to 35–37 (ADE). The chain crosses the membrane as a helical span at residues 38–60 (ILTHRVIWSFFFMVALLSVSRQW). Topologically, residues 61–72 (RQVKRLLKTPKK) are cytoplasmic. The helical transmembrane segment at 73–95 (IFLLALSAVLVGGNWLLFIWAVN) threads the bilayer. Over 96-99 (NHHM) the chain is Periplasmic. A helical membrane pass occupies residues 100–122 (LEASLGYFINPLVNILLGMIFLG). The Cytoplasmic portion of the chain corresponds to 123–128 (ERFRRM). The helical transmembrane segment at 129 to 146 (QWLAVILAVCGVLVQLWT) threads the bilayer. At 147-149 (FGS) the chain is on the periplasmic side. A helical transmembrane segment spans residues 150 to 167 (LPIIALGLAFSFAFYGLV). At 168-179 (RKKIAVEAQTGM) the chain is on the cytoplasmic side. The helical transmembrane segment at 180–197 (LVETLWLLPVAAIYLFGI) threads the bilayer. The Periplasmic portion of the chain corresponds to 198-211 (ADSPTSHMGQNALS). The helical transmembrane segment at 212–234 (LNLLLMAAGVVTTIPLLCFTGAA) threads the bilayer. At 235–238 (TRLR) the chain is on the cytoplasmic side. Residues 239–261 (LSTLGFFQYIGPTLMFLLAVTFY) traverse the membrane as a helical segment. Residues 262-270 (GEVPGADKM) lie on the Periplasmic side of the membrane. The helical transmembrane segment at 271–290 (VTFAFIWVALAIFVMDAIYT) threads the bilayer. The Cytoplasmic portion of the chain corresponds to 291-294 (QRKK).

This sequence belongs to the EamA transporter family.

Its subcellular location is the cell inner membrane. This is Protein RarD (rarD) from Salmonella typhimurium (strain LT2 / SGSC1412 / ATCC 700720).